Here is a 433-residue protein sequence, read N- to C-terminus: Monodehydroascorbate reductase (433 aa).

FAD contacts are provided by residues 12–15 (GGVS), Glu39, Arg46, Lys51, Ile94, and 145–146 (RE). Residues 170–176 (GGYIGLE), Glu194, Arg200, and Gly259 each bind NAD(+). NADP(+) is bound at residue 172–176 (YIGLE). Residues Arg200 and Gly259 each coordinate NADP(+). Asp296 contacts FAD. 312-313 (EH) is an NAD(+) binding site. Residue 312–313 (EH) coordinates NADP(+). Position 314 (Val314) interacts with FAD. Residue Arg318 participates in L-ascorbate binding. Tyr347 is an FAD binding site. NAD(+) is bound at residue Tyr347. Tyr347 provides a ligand contact to NADP(+). Position 349 (Arg349) interacts with L-ascorbate.

The protein belongs to the FAD-dependent oxidoreductase family. It depends on FAD as a cofactor. As to expression, expressed at relatively low levels in all tissues examined.

It is found in the cytoplasm. It carries out the reaction 2 monodehydro-L-ascorbate radical + NADH + H(+) = 2 L-ascorbate + NAD(+). Its function is as follows. Catalyzes the conversion of monodehydroascorbate to ascorbate, oxidizing NADH in the process. This is Monodehydroascorbate reductase from Pisum sativum (Garden pea).